Here is a 263-residue protein sequence, read N- to C-terminus: Probable ABC transporter permease protein slr1045 (263 aa).

The next 7 membrane-spanning stretches (helical) occupy residues 12 to 32 (LWFQ…LHIL), 52 to 72 (SMAI…IQVA), 97 to 117 (APVL…AAEI), 140 to 162 (LVVP…SLFV), 167 to 186 (GLVI…LNSV), 192 to 212 (LWDV…IAII), and 234 to 254 (AVVT…WLMF).

The protein belongs to the MlaE permease family.

It is found in the cell membrane. Functionally, could be part of an ABC transporter complex. This is Probable ABC transporter permease protein slr1045 from Synechocystis sp. (strain ATCC 27184 / PCC 6803 / Kazusa).